The following is a 277-amino-acid chain: Photosystem I assembly factor PSA3, chloroplastic (277 aa).

A chloroplast-targeting transit peptide spans 1–45; that stretch reads MVVVTHISTSFHQISPSFFHLRLRNPSTTSSSRPKLDGGFALSIR.

In terms of assembly, interacts with PYG7.

It localises to the plastid. The protein localises to the chloroplast. Its subcellular location is the chloroplast thylakoid membrane. Its function is as follows. Nuclear genome-encoded factor required for the accumulation of photosystem I (PSI). Functions as a PSI biogenesis factor. Cooperates with PYG7 to promote the stable assembly of PSI in the thylakoid membrane. May target primarily the PsaC subunit. Does not seem to be required for the expression of chloroplast genes encoding PSI subunits. This is Photosystem I assembly factor PSA3, chloroplastic from Arabidopsis thaliana (Mouse-ear cress).